A 95-amino-acid chain; its full sequence is Protein K6 (95 aa).

The N-terminal stretch at 1 to 24 (MAPVHVLCCVSVLLATFYLTPTES) is a signal peptide.

This Human herpesvirus 8 type P (isolate GK18) (HHV-8) protein is Protein K6 (K6).